The sequence spans 534 residues: Glucans biosynthesis protein D (534 aa).

Residues 1-26 (MQRRDFIRNASLALAAFGLPSLPACA) constitute a signal peptide (tat-type signal).

The protein belongs to the OpgD/OpgG family. In terms of processing, predicted to be exported by the Tat system. The position of the signal peptide cleavage has not been experimentally proven.

It is found in the periplasm. Its pathway is glycan metabolism; osmoregulated periplasmic glucan (OPG) biosynthesis. Its function is as follows. Probably involved in the control of the structural glucose backbone of osmoregulated periplasmic glucans (OPGs). This chain is Glucans biosynthesis protein D, found in Stenotrophomonas maltophilia (strain K279a).